The chain runs to 100 residues: Urease subunit gamma (100 aa).

Belongs to the urease gamma subunit family. In terms of assembly, heterotrimer of UreA (gamma), UreB (beta) and UreC (alpha) subunits. Three heterotrimers associate to form the active enzyme.

It is found in the cytoplasm. The catalysed reaction is urea + 2 H2O + H(+) = hydrogencarbonate + 2 NH4(+). The protein operates within nitrogen metabolism; urea degradation; CO(2) and NH(3) from urea (urease route): step 1/1. This is Urease subunit gamma from Edwardsiella ictaluri (strain 93-146).